Consider the following 348-residue polypeptide: Protein arginine N-methyltransferase 1 (348 aa).

The region spanning 20-322 is the SAM-dependent MTase PRMT-type domain; it reads EQHYFNSYDH…EKNNRDLNIK (303 aa). Residues His33, Arg42, Gly66, Asp88, and Glu117 each coordinate S-adenosyl-L-methionine. Residues Glu132 and Glu141 contribute to the active site.

Belongs to the class I-like SAM-binding methyltransferase superfamily. Protein arginine N-methyltransferase family. Homodimer. The dimers can then associate to form a ring-shaped homohexamer. Interacts with NPL3, BRE5, MTR4, SNF2, SUM1, and SSD1.

It is found in the nucleus. The enzyme catalyses L-arginyl-[protein] + S-adenosyl-L-methionine = N(omega)-methyl-L-arginyl-[protein] + S-adenosyl-L-homocysteine + H(+). It carries out the reaction L-arginyl-[protein] + 2 S-adenosyl-L-methionine = N(omega),N(omega)-dimethyl-L-arginyl-[protein] + 2 S-adenosyl-L-homocysteine + 2 H(+). Functionally, S-adenosyl-L-methionine-dependent protein-arginine N-methyltransferase that catalyzes both the mono- and asymmetric (type I) dimethylation of the guanidino nitrogens of arginine residues in a variety of RNA-binding proteins such as heterogeneous nuclear ribonucleoproteins (hnRNPs) and small nuclear ribonucleoproteins (snRNPs). Methylates NAB2, NPL3, HRP1 and YRA1, shuttling hnRNPs involved in mRNA processing and export, facilitating their export out of the nucleus. Methylation of NPL3 weakens its interaction with THO2, a component of the TREX (transcription/export) complex important for transcriptional elongation and recruitment of mRNA export factors. Methylates the hnRNP HRB1, but does not influence its subcellular location. Methylates the nucleolar proteins GAR1, NOP1 and NSR1. Methylates the snRNP SNP1 and modulates the cotranscriptional recruitment of splicing factors. Dimethylates free histone H4 (HHF1/HHF2) at 'Arg-4' (H4R3me2a) and plays a role in preservation and establishment of silent chromatin domains. Mono- and dimethylates ribosomal protein S2 (RPS2) at 'Arg-11'. Methylates the catalytic subunit of the SWI/SNF chromatin-remodeling complex SNF2. This is Protein arginine N-methyltransferase 1 from Saccharomyces cerevisiae (strain ATCC 204508 / S288c) (Baker's yeast).